A 79-amino-acid polypeptide reads, in one-letter code: Endothelin-2 (79 aa).

The segment at proline 1–arginine 23 is disordered. Residues cysteine 24–leucine 39 form an endothelin-like region. Residues serine 51–serine 79 form a disordered region.

It belongs to the endothelin/sarafotoxin family.

It is found in the secreted. Functionally, endothelins are endothelium-derived vasoconstrictor peptides. The polypeptide is Endothelin-2 (EDN2) (Macaca fascicularis (Crab-eating macaque)).